The following is a 98-amino-acid chain: NADH-ubiquinone oxidoreductase chain 4L (98 aa).

3 consecutive transmembrane segments (helical) span residues 1-21 (MPLIYMNITLAFAISLLGMLI), 29-49 (SLLCLEGMMLSLFIMSTLMAL), and 61-81 (VVLLVFAACEAAVGLALLVSI).

It belongs to the complex I subunit 4L family. In terms of assembly, core subunit of respiratory chain NADH dehydrogenase (Complex I) which is composed of 45 different subunits.

The protein localises to the mitochondrion inner membrane. It catalyses the reaction a ubiquinone + NADH + 5 H(+)(in) = a ubiquinol + NAD(+) + 4 H(+)(out). Core subunit of the mitochondrial membrane respiratory chain NADH dehydrogenase (Complex I) which catalyzes electron transfer from NADH through the respiratory chain, using ubiquinone as an electron acceptor. Part of the enzyme membrane arm which is embedded in the lipid bilayer and involved in proton translocation. This Hylobates lar (Lar gibbon) protein is NADH-ubiquinone oxidoreductase chain 4L (MT-ND4L).